The primary structure comprises 318 residues: Ribosomal RNA small subunit methyltransferase H (318 aa).

S-adenosyl-L-methionine-binding positions include 34-36, Asp-52, Phe-79, Asp-100, and Gln-107; that span reads GGY. Positions 286-318 are disordered; sequence GPAPDEARANPRARSAKLRAAARTAAPAWETVS. Low complexity predominate over residues 303–318; it reads LRAAARTAAPAWETVS.

Belongs to the methyltransferase superfamily. RsmH family.

It is found in the cytoplasm. It carries out the reaction cytidine(1402) in 16S rRNA + S-adenosyl-L-methionine = N(4)-methylcytidine(1402) in 16S rRNA + S-adenosyl-L-homocysteine + H(+). Its function is as follows. Specifically methylates the N4 position of cytidine in position 1402 (C1402) of 16S rRNA. In Paramagnetospirillum magneticum (strain ATCC 700264 / AMB-1) (Magnetospirillum magneticum), this protein is Ribosomal RNA small subunit methyltransferase H.